The primary structure comprises 443 residues: Probable serine transporter (443 aa).

Residues M1–A48 lie on the Cytoplasmic side of the membrane. A helical transmembrane segment spans residues I49–L69. The Periplasmic segment spans residues L70–N110. The chain crosses the membrane as a helical span at residues W111–S131. The Cytoplasmic segment spans residues T132 to E149. Residues G150 to S170 form a helical membrane-spanning segment. The Periplasmic portion of the chain corresponds to S171–T182. Residues G183–W203 form a helical membrane-spanning segment. At H204 to L214 the chain is on the cytoplasmic side. Residues G215–I235 form a helical membrane-spanning segment. Residues Q236–N264 are Periplasmic-facing. The chain crosses the membrane as a helical span at residues I265–M285. Topologically, residues G286–N297 are cytoplasmic. 2 helical membrane-spanning segments follow: residues I298–V318 and V319–F339. At R340–R367 the chain is on the cytoplasmic side. A helical transmembrane segment spans residues G368 to L388. A topological domain (periplasmic) is located at residue S389. The helical transmembrane segment at F390–V410 threads the bilayer. Topologically, residues Y411–G421 are cytoplasmic. Residues M422–F442 form a helical membrane-spanning segment. S443 is a topological domain (periplasmic).

Belongs to the amino acid/polyamine transporter 2 family. SdaC/TdcC subfamily.

It localises to the cell inner membrane. In terms of biological role, plays a role in L-cysteine detoxification. May transport both D- and L-serine. The protein is Probable serine transporter (dlsT) of Escherichia coli (strain K12).